The sequence spans 85 residues: Kunitz-type serine protease inhibitor homolog beta-bungarotoxin B4 chain (85 aa).

The N-terminal stretch at 1-24 (MSSGGLLLLLGLLTLCAELTPVSS) is a signal peptide. A BPTI/Kunitz inhibitor domain is found at 31-81 (CDKPPDTKICQTVVRAFYYKPSAKRCVQFRYGGCNGNGNHFKSDHLCRCEC). 3 disulfides stabilise this stretch: cysteine 31–cysteine 81, cysteine 40–cysteine 64, and cysteine 56–cysteine 77.

It belongs to the venom Kunitz-type family. Heterodimer; disulfide-linked. The A chains have phospholipase A2 activity and the B chains show homology with the basic protease inhibitors. As to expression, expressed by the venom gland.

It is found in the secreted. Beta-bungarotoxins are presynaptic neurotoxins of the venom. The B chain is homologous to venom basic protease inhibitors but has no protease inhibitor activity and blocks voltage-gated potassium channels (Kv). This chain is Kunitz-type serine protease inhibitor homolog beta-bungarotoxin B4 chain, found in Bungarus multicinctus (Many-banded krait).